Here is a 242-residue protein sequence, read N- to C-terminus: UPF0246 protein SSA_1395 (242 aa).

The protein belongs to the UPF0246 family.

The protein is UPF0246 protein SSA_1395 of Streptococcus sanguinis (strain SK36).